Consider the following 134-residue polypeptide: Large ribosomal subunit protein uL22 (134 aa).

The protein belongs to the universal ribosomal protein uL22 family. Part of the 50S ribosomal subunit.

Its function is as follows. This protein binds specifically to 23S rRNA; its binding is stimulated by other ribosomal proteins, e.g. L4, L17, and L20. It is important during the early stages of 50S assembly. It makes multiple contacts with different domains of the 23S rRNA in the assembled 50S subunit and ribosome. The globular domain of the protein is located near the polypeptide exit tunnel on the outside of the subunit, while an extended beta-hairpin is found that lines the wall of the exit tunnel in the center of the 70S ribosome. The sequence is that of Large ribosomal subunit protein uL22 from Rhodococcus erythropolis (strain PR4 / NBRC 100887).